The primary structure comprises 120 residues: Glycine cleavage system H protein (120 aa).

In terms of domain architecture, Lipoyl-binding spans 17–99; it reads VATVGITAHA…MGAGWFFKLK (83 aa). An N6-lipoyllysine modification is found at lysine 58.

It belongs to the GcvH family. As to quaternary structure, the glycine cleavage system is composed of four proteins: P, T, L and H. Requires (R)-lipoate as cofactor.

Functionally, the glycine cleavage system catalyzes the degradation of glycine. The H protein shuttles the methylamine group of glycine from the P protein to the T protein. This Rhizobium rhizogenes (strain K84 / ATCC BAA-868) (Agrobacterium radiobacter) protein is Glycine cleavage system H protein.